The chain runs to 320 residues: Cytochrome f (320 aa).

The first 35 residues, 1–35 (MQTRNTLSWIKEEITRSISVSLMIYIITWASISNA), serve as a signal peptide directing secretion. Heme contacts are provided by Y36, C56, C59, and H60. The chain crosses the membrane as a helical span at residues 286 to 306 (VQGLLFFLASVVLAQIFLVLK).

This sequence belongs to the cytochrome f family. In terms of assembly, the 4 large subunits of the cytochrome b6-f complex are cytochrome b6, subunit IV (17 kDa polypeptide, petD), cytochrome f and the Rieske protein, while the 4 small subunits are PetG, PetL, PetM and PetN. The complex functions as a dimer. Heme serves as cofactor.

It localises to the plastid. The protein resides in the chloroplast thylakoid membrane. Component of the cytochrome b6-f complex, which mediates electron transfer between photosystem II (PSII) and photosystem I (PSI), cyclic electron flow around PSI, and state transitions. This chain is Cytochrome f, found in Carica papaya (Papaya).